A 194-amino-acid chain; its full sequence is Histone H1.0 (194 aa).

An N-acetylmethionine modification is found at Met-1. Over residues 1–11 (MTENSTSAPAA) the composition is skewed to low complexity. Positions 1–29 (MTENSTSAPAAKPKRAKASKKSTDHPKYS) are disordered. Thr-2 carries the post-translational modification N-acetylthreonine; in Histone H1.0, N-terminally processed. Residues 24–97 (DHPKYSDMVV…GASGSFRLAK (74 aa)) form the H15 domain. Arg-42 bears the Citrulline mark. The interval 84 to 194 (TKGVGASGSF…SSAKRAGKKK (111 aa)) is disordered. Ser-104 is subject to ADP-ribosylserine. A compositionally biased stretch (basic residues) spans 105–194 (VAFKKTKKEI…SSAKRAGKKK (90 aa)).

Belongs to the histone H1/H5 family. In terms of processing, ADP-ribosylated on Ser-104 in response to DNA damage.

The protein localises to the nucleus. It is found in the chromosome. Functionally, histones H1 are necessary for the condensation of nucleosome chains into higher-order structures. The histones H1.0 are found in cells that are in terminal stages of differentiation or that have low rates of cell division. In Pongo abelii (Sumatran orangutan), this protein is Histone H1.0 (H1-0).